The following is a 301-amino-acid chain: Uricase-2 isozyme 2 (301 aa).

Active-site charge relay system residues include Lys17 and Thr63. Residues Thr63, Asp64, Phe165, Arg182, Val237, Gln238, and Asn257 each coordinate urate. Residue His259 is the Charge relay system of the active site. The short motif at 299-301 is the Microbody targeting signal element; that stretch reads SKL.

This sequence belongs to the uricase family.

It localises to the peroxisome. The enzyme catalyses urate + O2 + H2O = 5-hydroxyisourate + H2O2. Its pathway is purine metabolism; urate degradation; (S)-allantoin from urate: step 1/3. In terms of biological role, catalyzes the oxidation of uric acid to 5-hydroxyisourate, which is further processed to form (S)-allantoin. This is Uricase-2 isozyme 2 from Canavalia lineata (Beach bean).